The sequence spans 383 residues: Arginine biosynthesis bifunctional protein ArgJ (383 aa).

Residues Thr-146, Lys-168, Thr-179, Glu-259, Asn-378, and Ser-383 each coordinate substrate. Thr-179 serves as the catalytic Nucleophile.

This sequence belongs to the ArgJ family. As to quaternary structure, heterotetramer of two alpha and two beta chains.

The protein resides in the cytoplasm. The enzyme catalyses N(2)-acetyl-L-ornithine + L-glutamate = N-acetyl-L-glutamate + L-ornithine. It carries out the reaction L-glutamate + acetyl-CoA = N-acetyl-L-glutamate + CoA + H(+). The protein operates within amino-acid biosynthesis; L-arginine biosynthesis; L-ornithine and N-acetyl-L-glutamate from L-glutamate and N(2)-acetyl-L-ornithine (cyclic): step 1/1. It participates in amino-acid biosynthesis; L-arginine biosynthesis; N(2)-acetyl-L-ornithine from L-glutamate: step 1/4. Functionally, catalyzes two activities which are involved in the cyclic version of arginine biosynthesis: the synthesis of N-acetylglutamate from glutamate and acetyl-CoA as the acetyl donor, and of ornithine by transacetylation between N(2)-acetylornithine and glutamate. The sequence is that of Arginine biosynthesis bifunctional protein ArgJ from Streptomyces avermitilis (strain ATCC 31267 / DSM 46492 / JCM 5070 / NBRC 14893 / NCIMB 12804 / NRRL 8165 / MA-4680).